We begin with the raw amino-acid sequence, 331 residues long: GTP 3',8-cyclase 2 (331 aa).

In terms of domain architecture, Radical SAM core spans 9–234; that stretch reads PFGRRITYLR…PSLARSGGPS (226 aa). R18 contacts GTP. Positions 25 and 29 each coordinate [4Fe-4S] cluster. Position 31 (Y31) interacts with S-adenosyl-L-methionine. C32 is a binding site for [4Fe-4S] cluster. R67 is a GTP binding site. G71 is a binding site for S-adenosyl-L-methionine. T98 contributes to the GTP binding site. S122 provides a ligand contact to S-adenosyl-L-methionine. K159 provides a ligand contact to GTP. An S-adenosyl-L-methionine-binding site is contributed by M193. [4Fe-4S] cluster contacts are provided by C257 and C260. GTP is bound at residue 262-264; sequence RVR. C274 is a binding site for [4Fe-4S] cluster.

This sequence belongs to the radical SAM superfamily. MoaA family. In terms of assembly, monomer and homodimer. [4Fe-4S] cluster serves as cofactor.

The enzyme catalyses GTP + AH2 + S-adenosyl-L-methionine = (8S)-3',8-cyclo-7,8-dihydroguanosine 5'-triphosphate + 5'-deoxyadenosine + L-methionine + A + H(+). Its pathway is cofactor biosynthesis; molybdopterin biosynthesis. Functionally, catalyzes the cyclization of GTP to (8S)-3',8-cyclo-7,8-dihydroguanosine 5'-triphosphate. The sequence is that of GTP 3',8-cyclase 2 (moaA2) from Pseudomonas aeruginosa (strain ATCC 15692 / DSM 22644 / CIP 104116 / JCM 14847 / LMG 12228 / 1C / PRS 101 / PAO1).